Reading from the N-terminus, the 736-residue chain is MTNSLIQPKGSVSKETNIQSIARITGSKIEEVKYLEDGLDIAGLKFVYDSSTETIWKLNGNETGMVDSWNIVDESTIIIVTNISSYQINILEQIILSNDDAAGKIGTSNGLSVQKNLDNISNNITLDTGGVLKDALKFITPEMFVINNEKYIHGTTLDAVPYLQAAIDYGKTNNLPVVLSQRYPCITFPQTYELPRDDGTVYPGWITAGTDQNIDPEPIYTMRAAIRLYNDSVIIGTNMQTTGIRGNWSKTSGPYDLNGTIGVFISGDSGKDGYVRYHMHDLNISGFMIGRLCEGISAFSTEDNLQISSCGITGIFQGEDAVERGFIKLWYNIAGDVFGGQWLTRNYAYASTYLPPYPASDIYRAGWNDSSFTEKYHYYGDTSLNFTHTAYSSLDNFFNTYFFKTANSITTANGGRLSNNKQTGVWPLGEYKGITGRAKTVYSRYGREILNCNILEAKIMWSPRTPFYHTSQSGSWVGNSKIGNVILERVGIINYAAGNTTGNRFNVDNVDPWDPSQNFFPAMVCRGNIGCMDVTRSGHVQQSVSNEINPIVTGGQIHRQYRRSDDTSSYSMLTLQEFKNSWVSKYVFNSSYAFVQPLVFTSSNAQFKYDYGTFTPVLQIAGSYITLTEATGIYHRFGDIIRIHIRLRNSNLTINTAGPFRISGLPFISSSIQTGYTKGSVFTPQATGVTLIPLVTPSTDVLTILKDSAGTSFSHPAGTFDFSFHADFDYVISFNS.

It is found in the virion. Its function is as follows. Functions as a receptor binding protein (RBP) and probably mediates the attachment to the host capsular exopolysaccharides. Displays a depolymerase activity that specifically degrades the KN4-type polysaccharides of Klebsiella pneumoniae capsule. This is Depolymerase, capsule KN4-specific from Klebsiella phage K64-1 (Bacteriophage K64-1).